The primary structure comprises 325 residues: Thiamine-monophosphate kinase (325 aa).

Residues D30, S45, T46, and D47 each coordinate Mg(2+). Residue H54 coordinates substrate. The Mg(2+) site is built by D75 and D122. ATP contacts are provided by residues 121 to 122 (GD) and R146. Position 212 (D212) interacts with Mg(2+). ATP is bound at residue S214. A Mg(2+)-binding site is contributed by D215. 2 residues coordinate substrate: E263 and Y319.

This sequence belongs to the thiamine-monophosphate kinase family.

The enzyme catalyses thiamine phosphate + ATP = thiamine diphosphate + ADP. It participates in cofactor biosynthesis; thiamine diphosphate biosynthesis; thiamine diphosphate from thiamine phosphate: step 1/1. Catalyzes the ATP-dependent phosphorylation of thiamine-monophosphate (TMP) to form thiamine-pyrophosphate (TPP), the active form of vitamin B1. In Escherichia coli O157:H7, this protein is Thiamine-monophosphate kinase.